Reading from the N-terminus, the 238-residue chain is MLGSPCLLWLLAVTFLVPRAQPLAPQDFEEEEADETETAWPPLPAVPCDYDHCRHLQVPCKELQRVGPAACLCPGLSSPAQPPDPPRMGEVRIAAEEGRAVVHWCAPFSPVLHYWLLLWDGSEAAQKGPPLNATVRRAELKGLKPGGIYVVCVVAANEAGASRVPQAGGEGLEGADIPAFGPCSRLAVPPNPRTLVHAAVGVGTALALLSCAALVWHFCLRDRWGCPRRAAARAAGAL.

The N-terminal stretch at 1-22 is a signal peptide; that stretch reads MLGSPCLLWLLAVTFLVPRAQP. The Extracellular portion of the chain corresponds to 23–194; sequence LAPQDFEEEE…RLAVPPNPRT (172 aa). Residues 82–176 enclose the Fibronectin type-III domain; that stretch reads PPDPPRMGEV…AGGEGLEGAD (95 aa). Asn132 carries N-linked (GlcNAc...) asparagine glycosylation. The helical transmembrane segment at 195–215 threads the bilayer; that stretch reads LVHAAVGVGTALALLSCAALV. The Cytoplasmic segment spans residues 216–238; that stretch reads WHFCLRDRWGCPRRAAARAAGAL.

It is found in the membrane. The protein is LRRN4 C-terminal-like protein (LRRN4CL) of Homo sapiens (Human).